The following is a 685-amino-acid chain: Sodium/glucose cotransporter 4 (685 aa).

The segment at 1-20 is disordered; sequence MNTELVAMEPGVSRNGVRTE. Residues 1–32 are Extracellular-facing; it reads MNTELVAMEPGVSRNGVRTETTTNPSLGLHTY. A helical membrane pass occupies residues 33 to 53; it reads DIVVVVIYFVFVLAVGIWSSI. The Cytoplasmic portion of the chain corresponds to 54 to 71; sequence RASRGTVGGYFLAGRSMT. A helical transmembrane segment spans residues 72 to 94; that stretch reads WWPIGASLMSSNVGSGLFIGLAG. At 95–110 the chain is on the extracellular side; sequence TGAAGGLAVGGFEWNA. A helical membrane pass occupies residues 111–131; that stretch reads TFLLLALGWIFVPVYIAAGVV. Topologically, residues 132–153 are cytoplasmic; that stretch reads TMPQYLKKRFGGQRIQVYMSVL. A helical membrane pass occupies residues 154–174; that stretch reads SLILYIFTKISTDIFSGALFI. Residues 175-186 lie on the Extracellular side of the membrane; that stretch reads QMALGWNLYLST. Residues 187–207 form a helical membrane-spanning segment; it reads VILLVVTAVYTIAGGLTAVIY. Topologically, residues 208-213 are cytoplasmic; the sequence is TDALQT. A helical membrane pass occupies residues 214–234; sequence VIMVGGALVLMFLGFQEVGWY. Topologically, residues 235–271 are extracellular; it reads PGLQQLYRQAIPNTTVPNTTCHLPRPDAFHMLRDPVN. Asparagine 247 carries an N-linked (GlcNAc...) asparagine glycan. The chain crosses the membrane as a helical span at residues 272–292; that stretch reads GDIPWPGLIFGLTVLATWCWC. The Cytoplasmic segment spans residues 293-313; it reads TDQVIVQRSLAAKNLSHAKGG. Residues 314–334 traverse the membrane as a helical segment; that stretch reads SVLGGYLKILPMFFIVMPGMI. The Extracellular segment spans residues 335–379; that stretch reads SRALYPDEVACVDPDICQRVCGARVGCSNIAYPKLVMALMPVGLR. A helical membrane pass occupies residues 380 to 402; it reads GLMIAVIMAALMSSLTSIFNSSS. At 403–423 the chain is on the cytoplasmic side; sequence TLFAIDVWQRFRRQASEQELM. The helical transmembrane segment at 424-444 threads the bilayer; it reads VVGRLFVVFLVVISILWIPII. Residues 445–455 are Extracellular-facing; it reads QSSNSGQLFDY. The chain crosses the membrane as a helical span at residues 456-476; that stretch reads IQSITSYLAPPITALFLLAIF. At 477-483 the chain is on the cytoplasmic side; it reads CKRVNEP. A helical transmembrane segment spans residues 484-504; the sequence is GAFWGLMFGLVVGILRMILEF. Residues 505–526 are Extracellular-facing; sequence SYSAPACGEMDRRPAVLKDFHY. A helical transmembrane segment spans residues 527-547; it reads LYFALLLCGLTAIIIVVISFF. Residues 548 to 664 lie on the Cytoplasmic side of the membrane; it reads TEPIPDDKLA…SIEEEPLWRR (117 aa). The tract at residues 577–616 is disordered; the sequence is VSVNNTEDDNSPGLAGRPVVEGPAGDEEEANTTQGPEQPG. The helical transmembrane segment at 665 to 685 threads the bilayer; that stretch reads VCNINAIILLAINIFLWGYFA.

It belongs to the sodium:solute symporter (SSF) (TC 2.A.21) family.

The protein localises to the cell membrane. The enzyme catalyses D-mannose(out) + n Na(+)(out) = D-mannose(in) + n Na(+)(in). In terms of biological role, electrogenic Na(+)-coupled sugar symporter that may play a primary role in D-mannose and possibly D-fructose and D-glucose transport at the plasma membrane. Transporter activity is driven by a transmembrane Na(+) electrochemical gradient set by the Na(+)/K(+) pump. Exclusively recognizes sugar substrates having a pyranose ring with an axial hydroxyl group on carbon 2. The protein is Sodium/glucose cotransporter 4 (Slc5a9) of Mus musculus (Mouse).